Consider the following 550-residue polypeptide: CTP synthase (550 aa).

Residues 1–270 (MTKYVFVTGG…DRIICEELKL (270 aa)) form an amidoligase domain region. Ser-13 provides a ligand contact to CTP. UTP is bound at residue Ser-13. Residues 14–19 (SLGKGI) and Asp-71 contribute to the ATP site. The Mg(2+) site is built by Asp-71 and Glu-144. Residues 151 to 153 (DIE), 191 to 196 (KTKPTQ), and Lys-227 contribute to the CTP site. Residues 191 to 196 (KTKPTQ) and Lys-227 contribute to the UTP site. The Glutamine amidotransferase type-1 domain maps to 295 to 547 (TIGMVGKYVD…VEAALANKQA (253 aa)). Gly-356 is an L-glutamine binding site. Cys-383 acts as the Nucleophile; for glutamine hydrolysis in catalysis. Residues 384 to 387 (LGMQ), Glu-407, and Arg-473 each bind L-glutamine. Catalysis depends on residues His-520 and Glu-522.

It belongs to the CTP synthase family. Homotetramer.

It catalyses the reaction UTP + L-glutamine + ATP + H2O = CTP + L-glutamate + ADP + phosphate + 2 H(+). It carries out the reaction L-glutamine + H2O = L-glutamate + NH4(+). The enzyme catalyses UTP + NH4(+) + ATP = CTP + ADP + phosphate + 2 H(+). It participates in pyrimidine metabolism; CTP biosynthesis via de novo pathway; CTP from UDP: step 2/2. Allosterically activated by GTP, when glutamine is the substrate; GTP has no effect on the reaction when ammonia is the substrate. The allosteric effector GTP functions by stabilizing the protein conformation that binds the tetrahedral intermediate(s) formed during glutamine hydrolysis. Inhibited by the product CTP, via allosteric rather than competitive inhibition. Functionally, catalyzes the ATP-dependent amination of UTP to CTP with either L-glutamine or ammonia as the source of nitrogen. Regulates intracellular CTP levels through interactions with the four ribonucleotide triphosphates. This Burkholderia lata (strain ATCC 17760 / DSM 23089 / LMG 22485 / NCIMB 9086 / R18194 / 383) protein is CTP synthase.